We begin with the raw amino-acid sequence, 148 residues long: MNTISILSTTDLPAAWQIEQRAHAFPWSEKTFFGNQGERYLNLKLTADDRMAAFAITQVVLDEATLFNIAVDPDFQRRGLGRMLLEHLIDELETRGVVTLWLEVRASNAAAIALYESLGFNEATIRRNYYPTAQGHEDAIIMALPISM.

The N-acetyltransferase domain maps to 2–147; the sequence is NTISILSTTD…DAIIMALPIS (146 aa). Acetyl-CoA-binding positions include 69-71 and 77-82; these read IAV and RRGLGR. Catalysis depends on E103, which acts as the Proton acceptor. N108 provides a ligand contact to acetyl-CoA. The Proton donor role is filled by Y115.

This sequence belongs to the acetyltransferase family. RimI subfamily.

Its subcellular location is the cytoplasm. The enzyme catalyses N-terminal L-alanyl-[ribosomal protein bS18] + acetyl-CoA = N-terminal N(alpha)-acetyl-L-alanyl-[ribosomal protein bS18] + CoA + H(+). Its function is as follows. Acetylates the N-terminal alanine of ribosomal protein bS18. This is [Ribosomal protein bS18]-alanine N-acetyltransferase from Salmonella typhimurium (strain LT2 / SGSC1412 / ATCC 700720).